Consider the following 330-residue polypeptide: Transcriptional regulatory protein PHO23 (330 aa).

Residues 139–272 (EKIESKSNSK…NSNNSRISRP (134 aa)) are disordered. A compositionally biased stretch (polar residues) spans 231–254 (TAVSPSTISTATAVNNGRIGTSTA). Low complexity predominate over residues 255–269 (SRGVSSVGNSNNSRI). The segment at 280-329 (PLYCYCNQVAYGEMVGCDGADCELEWFHLPCIGLETLPKGKWYCDDCKKK) adopts a PHD-type zinc-finger fold. Positions 283, 285, 296, 301, 307, 310, 323, and 326 each coordinate Zn(2+).

It belongs to the ING family. In terms of assembly, interacts with H3K4me3 and to a lesser extent with H3K4me2. Component of the RPD3C(L) complex composed of at least ASH1, CTI6, DEP1, PHO23, RPD3, RXT2, RXT3, SAP30, SDS3, SIN3, UME1 and UME6.

The protein localises to the nucleus. Component of the RPD3C(L) histone deacetylase complex (HDAC) responsible for the deacetylation of lysine residues on the N-terminal part of the core histones (H2A, H2B, H3 and H4). Histone deacetylation gives a tag for epigenetic repression and plays an important role in transcriptional regulation, cell cycle progression and developmental events. The chain is Transcriptional regulatory protein PHO23 (PHO23) from Saccharomyces cerevisiae (strain ATCC 204508 / S288c) (Baker's yeast).